Consider the following 471-residue polypeptide: V-type ATP synthase beta chain (471 aa).

This sequence belongs to the ATPase alpha/beta chains family.

Produces ATP from ADP in the presence of a proton gradient across the membrane. The V-type beta chain is a regulatory subunit. The chain is V-type ATP synthase beta chain from Streptococcus pyogenes serotype M49 (strain NZ131).